The chain runs to 231 residues: Allergen Ani s 10 (231 aa).

The signal sequence occupies residues 1–19 (MHLITALVLLLQLIHFITS). 7 tandem repeats follow at residues 28–56 (GGPG…QQNI), 57–85 (GGPG…QENI), 86–114 (GGPG…QQSI), 115–143 (EGPG…QQSI), 144–172 (EGPG…QQNI), 173–201 (GGPG…QQNI), and 204–231 (GGPG…SMQA). A 6 X 29 AA tandem repeats of [EG]-G-P-G-P-V-[IV]-[SG]-G-S-G-I-G-[ND]-V-W-[NE]-K-A-N-E-[QP]-A-[AE]-[QEH]-Q-[EQ]-[NS]-I region spans residues 28–201 (GGPGPVVGGS…NEQAAEQQNI (174 aa)). Disordered stretches follow at residues 107 to 126 (QAAH…GSGI) and 134 to 231 (NEQA…SMQA). Low complexity-rich tracts occupy residues 114-123 (IEGPGPVVSG), 143-152 (IEGPGPVVSG), and 177-187 (PVISGSGIGNV).

This chain is Allergen Ani s 10, found in Anisakis simplex (Herring worm).